The primary structure comprises 81 residues: Omega-conotoxin-like 3 (81 aa).

Positions 1–22 are cleaved as a signal peptide; the sequence is MKLTCMMIVAVLFLTASIFITA. Residues 23-51 constitute a propeptide that is removed on maturation; the sequence is DNSRNGIENLPRMRRHEMKKPKASKLNKR. Intrachain disulfides connect Cys53–Cys71, Cys60–Cys75, and Cys70–Cys79.

This sequence belongs to the conotoxin O1 superfamily. As to expression, expressed by the venom duct.

It localises to the secreted. Omega-conotoxins act at presynaptic membranes, they bind and block voltage-gated calcium channels (Cav). The sequence is that of Omega-conotoxin-like 3 from Conus imperialis (Imperial cone).